The sequence spans 154 residues: Small ribosomal subunit protein uS7 (154 aa).

This sequence belongs to the universal ribosomal protein uS7 family. As to quaternary structure, part of the 30S ribosomal subunit. Contacts proteins S9 and S11.

Functionally, one of the primary rRNA binding proteins, it binds directly to 16S rRNA where it nucleates assembly of the head domain of the 30S subunit. Is located at the subunit interface close to the decoding center, probably blocks exit of the E-site tRNA. The sequence is that of Small ribosomal subunit protein uS7 from Karelsulcia muelleri (strain GWSS) (Sulcia muelleri).